A 253-amino-acid chain; its full sequence is Pimeloyl-[acyl-carrier protein] methyl ester esterase (253 aa).

Substrate is bound by residues Trp18, 78–79, and 139–143; these read SL and FLALD. The active-site Nucleophile is the Ser78. Catalysis depends on residues Asp203 and His231. His231 is a binding site for substrate.

Belongs to the AB hydrolase superfamily. Carboxylesterase BioH family. In terms of assembly, monomer.

The protein resides in the cytoplasm. The enzyme catalyses 6-carboxyhexanoyl-[ACP] methyl ester + H2O = 6-carboxyhexanoyl-[ACP] + methanol + H(+). The protein operates within cofactor biosynthesis; biotin biosynthesis. In terms of biological role, the physiological role of BioH is to remove the methyl group introduced by BioC when the pimeloyl moiety is complete. It allows to synthesize pimeloyl-ACP via the fatty acid synthetic pathway through the hydrolysis of the ester bonds of pimeloyl-ACP esters. The protein is Pimeloyl-[acyl-carrier protein] methyl ester esterase of Xanthomonas oryzae pv. oryzae (strain MAFF 311018).